Here is a 250-residue protein sequence, read N- to C-terminus: Cytochrome c oxidase subunit 2 (250 aa).

At 1–39 (MFFLINKLVMNFDAPSPWGIYFQDSATPQMEGLNELHDN) the chain is on the mitochondrial intermembrane side. The helical transmembrane segment at 40 to 60 (IMYYLVVILFAVGWILLSIVI) threads the bilayer. At 61–81 (NYVSTKSPISHKYLNHGTLIE) the chain is on the mitochondrial matrix side. The chain crosses the membrane as a helical span at residues 82-104 (LIWTITPAVILILIAFPSFKLLY). Residues 105–250 (LMDEVSDPSM…EKFLIWLKEQ (146 aa)) lie on the Mitochondrial intermembrane side of the membrane. Cu cation contacts are provided by histidine 185, cysteine 220, glutamate 222, cysteine 224, histidine 228, and methionine 231. Residue glutamate 222 participates in Mg(2+) binding.

The protein belongs to the cytochrome c oxidase subunit 2 family. In terms of assembly, component of the cytochrome c oxidase (complex IV, CIV), a multisubunit enzyme composed of a catalytic core of 3 subunits and several supernumerary subunits. The complex exists as a monomer or a dimer and forms supercomplexes (SCs) in the inner mitochondrial membrane with ubiquinol-cytochrome c oxidoreductase (cytochrome b-c1 complex, complex III, CIII). It depends on Cu cation as a cofactor.

Its subcellular location is the mitochondrion inner membrane. The catalysed reaction is 4 Fe(II)-[cytochrome c] + O2 + 8 H(+)(in) = 4 Fe(III)-[cytochrome c] + 2 H2O + 4 H(+)(out). Functionally, component of the cytochrome c oxidase, the last enzyme in the mitochondrial electron transport chain which drives oxidative phosphorylation. The respiratory chain contains 3 multisubunit complexes succinate dehydrogenase (complex II, CII), ubiquinol-cytochrome c oxidoreductase (cytochrome b-c1 complex, complex III, CIII) and cytochrome c oxidase (complex IV, CIV), that cooperate to transfer electrons derived from NADH and succinate to molecular oxygen, creating an electrochemical gradient over the inner membrane that drives transmembrane transport and the ATP synthase. Cytochrome c oxidase is the component of the respiratory chain that catalyzes the reduction of oxygen to water. Electrons originating from reduced cytochrome c in the intermembrane space (IMS) are transferred via the dinuclear copper A center (CU(A)) of subunit 2 and heme A of subunit 1 to the active site in subunit 1, a binuclear center (BNC) formed by heme A3 and copper B (CU(B)). The BNC reduces molecular oxygen to 2 water molecules using 4 electrons from cytochrome c in the IMS and 4 protons from the mitochondrial matrix. The protein is Cytochrome c oxidase subunit 2 (COII) of Podospora anserina (strain S / ATCC MYA-4624 / DSM 980 / FGSC 10383) (Pleurage anserina).